The sequence spans 327 residues: Methionyl-tRNA formyltransferase (327 aa).

122–125 (SLLP) contacts (6S)-5,6,7,8-tetrahydrofolate.

Belongs to the Fmt family.

The enzyme catalyses L-methionyl-tRNA(fMet) + (6R)-10-formyltetrahydrofolate = N-formyl-L-methionyl-tRNA(fMet) + (6S)-5,6,7,8-tetrahydrofolate + H(+). In terms of biological role, attaches a formyl group to the free amino group of methionyl-tRNA(fMet). The formyl group appears to play a dual role in the initiator identity of N-formylmethionyl-tRNA by promoting its recognition by IF2 and preventing the misappropriation of this tRNA by the elongation apparatus. This Ralstonia pickettii (strain 12J) protein is Methionyl-tRNA formyltransferase.